The following is a 339-amino-acid chain: Glyceraldehyde-3-phosphate dehydrogenase (339 aa).

NAD(+) is bound by residues 12-13 (RI), Asp39, Arg84, and Ser127. Residues 157 to 159 (SCT), Thr188, Arg203, 216 to 217 (TG), and Arg239 contribute to the D-glyceraldehyde 3-phosphate site. The active-site Nucleophile is Cys158. Asn320 lines the NAD(+) pocket.

Belongs to the glyceraldehyde-3-phosphate dehydrogenase family. As to quaternary structure, homotetramer.

The protein localises to the cytoplasm. The enzyme catalyses D-glyceraldehyde 3-phosphate + phosphate + NAD(+) = (2R)-3-phospho-glyceroyl phosphate + NADH + H(+). Its pathway is carbohydrate degradation; glycolysis; pyruvate from D-glyceraldehyde 3-phosphate: step 1/5. Its function is as follows. Catalyzes the oxidative phosphorylation of glyceraldehyde 3-phosphate (G3P) to 1,3-bisphosphoglycerate (BPG) using the cofactor NAD. The first reaction step involves the formation of a hemiacetal intermediate between G3P and a cysteine residue, and this hemiacetal intermediate is then oxidized to a thioester, with concomitant reduction of NAD to NADH. The reduced NADH is then exchanged with the second NAD, and the thioester is attacked by a nucleophilic inorganic phosphate to produce BPG. The polypeptide is Glyceraldehyde-3-phosphate dehydrogenase (gap) (Mycobacterium bovis (strain ATCC BAA-935 / AF2122/97)).